Reading from the N-terminus, the 73-residue chain is Ocellatin-PT6 (73 aa).

Positions 1-22 (MAFLKKSLFLVLFLGLVSLSIC) are cleaved as a signal peptide. Residues 23 to 39 (DEEKRQDEDDDDDDDEE) constitute a propeptide that is removed on maturation.

In terms of tissue distribution, expressed by the skin glands.

The protein localises to the secreted. Its function is as follows. Has antibacterial activity against Gram-negative bacterium E.coli ATCC 25922 (MIC=120 uM) but not against S.pneumoniae ATCC 700603, S.choleraesuis ATCC 14028 or against Gram-positive bacterium S.aureus ATCC 29313. Shows no hemolytic activity and no cytotoxicity. The polypeptide is Ocellatin-PT6 (Leptodactylus pustulatus (Ceara white-lipped frog)).